Consider the following 615-residue polypeptide: AP-1-like transcription factor yap1 (615 aa).

The segment covering 27-50 (SSNNPTQKQQTVTHNSEANQNLNH) has biased composition (polar residues). 2 disordered regions span residues 27–84 (SSNN…EDSP) and 99–180 (NESL…RKEK). The Bipartite nuclear localization signal motif lies at 35–42 (QQTVTHNS). Residues 52 to 67 (PGHASSGSFSVSPPSG) are compositionally biased toward low complexity. Residues 68-75 (LDGSVNQS) carry the Bipartite nuclear localization signal motif. The segment covering 118–147 (PGDKRKDIDGQVNDKEDSGKKRRESDEKAA) has biased composition (basic and acidic residues). Residues 157-220 (SEPTSKRKAQ…ERLQLELKEY (64 aa)) enclose the bZIP domain. The segment at 162 to 183 (KRKAQNRAAQRAFRERKEKHLK) is basic motif. The segment at 185–192 (LEAKVEEL) is leucine-zipper. The tract at residues 214–364 (QLELKEYRKR…RGYQVNSSYS (151 aa)) is transcription activation 1. Residues 270-294 (LFTNTQTSKSNQNKAKDNPTATPRS) show a composition bias toward polar residues. The segment at 270 to 416 (LFTNTQTSKS…AVKATESSTP (147 aa)) is disordered. The segment at 289–301 (TATPRSEAQVPGV) is n-CRD. Residues 310–321 (SSPNGLSNGPSP) show a composition bias toward low complexity. 2 stretches are compositionally biased toward polar residues: residues 322–344 (AKST…SGTL) and 358–369 (QVNSSYSASTKQ). The span at 372–394 (HDTPSSDSPSSSSDSHQSQLLSS) shows a compositional bias: low complexity. The interval 409-508 (KATESSTPHA…SQDFGTFFDD (100 aa)) is transcription activation 2. Disulfide bonds link Cys-562-Cys-586, Cys-562-Cys-595, and Cys-586-Cys-595. Positions 562–595 (CNKIWDRLQSMEKFRNGEIDVDNLCSELRTKARC) are c-CRD. The Nuclear export signal signature appears at 580–587 (IDVDNLCS).

This sequence belongs to the bZIP family. YAP subfamily. Post-translationally, depending on the oxidative stress inducing agent, yap1 can undergo two distinct conformational changes, both involving disulfide bond formation, and both masking the nuclear export signal, thus abolishing nuclear export.

Its subcellular location is the nucleus. It is found in the cytoplasm. Its function is as follows. Transcription activator involved in oxidative stress response and redox homeostasis. Regulates the transcription of genes encoding antioxidant enzymes and components of the cellular thiol-reducing pathways, including thioredoxin peroxidase (aspF3), cytochrome peroxidase, and the protein AFUA_3G00730, which appears to belong to the glutathione S-transferase family. Proteins of the protein degradation pathway are also regulated by yap1, as well the p-nitroreductase family protein AFUA_5G09910. May be involved in antifungal resistance to voriconazole. The polypeptide is AP-1-like transcription factor yap1 (Aspergillus fumigatus (strain ATCC MYA-4609 / CBS 101355 / FGSC A1100 / Af293) (Neosartorya fumigata)).